Here is a 639-residue protein sequence, read N- to C-terminus: Threonine--tRNA ligase (639 aa).

A TGS domain is found at 1–61 (MIHITLPDGS…TQDSPLSIVT (61 aa)). The catalytic stretch occupies residues 242 to 533 (DHRKLGRELD…LIEEHAGALP (292 aa)). Cys-333, His-384, and His-510 together coordinate Zn(2+).

Belongs to the class-II aminoacyl-tRNA synthetase family. In terms of assembly, homodimer. It depends on Zn(2+) as a cofactor.

The protein resides in the cytoplasm. It catalyses the reaction tRNA(Thr) + L-threonine + ATP = L-threonyl-tRNA(Thr) + AMP + diphosphate + H(+). Its function is as follows. Catalyzes the attachment of threonine to tRNA(Thr) in a two-step reaction: L-threonine is first activated by ATP to form Thr-AMP and then transferred to the acceptor end of tRNA(Thr). Also edits incorrectly charged L-seryl-tRNA(Thr). In Acidovorax sp. (strain JS42), this protein is Threonine--tRNA ligase.